Reading from the N-terminus, the 568-residue chain is DNA ligase 2 (568 aa).

Glutamate 254 contributes to the ATP binding site. Lysine 256 functions as the N6-AMP-lysine intermediate in the catalytic mechanism. ATP contacts are provided by arginine 261, arginine 276, glutamate 306, phenylalanine 346, arginine 425, and lysine 431.

Belongs to the ATP-dependent DNA ligase family. Mg(2+) is required as a cofactor.

It catalyses the reaction ATP + (deoxyribonucleotide)n-3'-hydroxyl + 5'-phospho-(deoxyribonucleotide)m = (deoxyribonucleotide)n+m + AMP + diphosphate.. Functionally, DNA ligase that seals nicks in double-stranded DNA during DNA replication, DNA recombination and DNA repair. This chain is DNA ligase 2, found in Methanosarcina acetivorans (strain ATCC 35395 / DSM 2834 / JCM 12185 / C2A).